We begin with the raw amino-acid sequence, 162 residues long: NADH-quinone oxidoreductase subunit I (162 aa).

4Fe-4S ferredoxin-type domains follow at residues 54-83 (RRYENGEERCIACKLCEVVCPALAITINST) and 93-122 (SSYEIDLFKCIFCGYCEESCPVDSIVETNI). The [4Fe-4S] cluster site is built by Cys-63, Cys-66, Cys-69, Cys-73, Cys-102, Cys-105, Cys-108, and Cys-112.

It belongs to the complex I 23 kDa subunit family. NDH-1 is composed of 14 different subunits. Subunits NuoA, H, J, K, L, M, N constitute the membrane sector of the complex. Requires [4Fe-4S] cluster as cofactor.

The protein localises to the cell inner membrane. It carries out the reaction a quinone + NADH + 5 H(+)(in) = a quinol + NAD(+) + 4 H(+)(out). Functionally, NDH-1 shuttles electrons from NADH, via FMN and iron-sulfur (Fe-S) centers, to quinones in the respiratory chain. The immediate electron acceptor for the enzyme in this species is believed to be ubiquinone. Couples the redox reaction to proton translocation (for every two electrons transferred, four hydrogen ions are translocated across the cytoplasmic membrane), and thus conserves the redox energy in a proton gradient. The polypeptide is NADH-quinone oxidoreductase subunit I (Francisella tularensis subsp. holarctica (strain FTNF002-00 / FTA)).